The following is a 201-amino-acid chain: Probable GTP-binding protein EngB (201 aa).

The 176-residue stretch at 22-197 folds into the EngB-type G domain; the sequence is RLPEYAFIGR…LDYIDSINQE (176 aa). GTP-binding positions include 30 to 37, 57 to 61, 75 to 78, 142 to 145, and 173 to 178; these read GRSNVGKS, GKTQL, DLPG, TKAD, and VFITSS. Positions 37 and 59 each coordinate Mg(2+).

The protein belongs to the TRAFAC class TrmE-Era-EngA-EngB-Septin-like GTPase superfamily. EngB GTPase family. It depends on Mg(2+) as a cofactor.

Functionally, necessary for normal cell division and for the maintenance of normal septation. This Porphyromonas gingivalis (strain ATCC 33277 / DSM 20709 / CIP 103683 / JCM 12257 / NCTC 11834 / 2561) protein is Probable GTP-binding protein EngB.